The following is a 103-amino-acid chain: ESAT-6-like protein EsxF (103 aa).

This sequence belongs to the WXG100 family. CFP-10 subfamily.

The protein resides in the secreted. The polypeptide is ESAT-6-like protein EsxF (Mycobacterium tuberculosis (strain CDC 1551 / Oshkosh)).